Here is a 99-residue protein sequence, read N- to C-terminus: Malonate decarboxylase acyl carrier protein (99 aa).

At Ser25 the chain carries O-(phosphoribosyl dephospho-coenzyme A)serine.

Covalently binds the prosthetic group of malonate decarboxylase.

Its subcellular location is the cytoplasm. In terms of biological role, subunit of malonate decarboxylase, it is an acyl carrier protein to which acetyl and malonyl thioester residues are bound via a 2'-(5''-phosphoribosyl)-3'-dephospho-CoA prosthetic group and turn over during the catalytic mechanism. This Klebsiella pneumoniae protein is Malonate decarboxylase acyl carrier protein (mdcC).